Here is a 420-residue protein sequence, read N- to C-terminus: Glucose-1-phosphate adenylyltransferase (420 aa).

Residues tyrosine 107, glycine 173, 188 to 189 (EK), and serine 206 each bind alpha-D-glucose 1-phosphate.

It belongs to the bacterial/plant glucose-1-phosphate adenylyltransferase family. Homotetramer.

The enzyme catalyses alpha-D-glucose 1-phosphate + ATP + H(+) = ADP-alpha-D-glucose + diphosphate. It participates in glycan biosynthesis; glycogen biosynthesis. Its function is as follows. Involved in the biosynthesis of ADP-glucose, a building block required for the elongation reactions to produce glycogen. Catalyzes the reaction between ATP and alpha-D-glucose 1-phosphate (G1P) to produce pyrophosphate and ADP-Glc. This Shewanella baltica (strain OS155 / ATCC BAA-1091) protein is Glucose-1-phosphate adenylyltransferase.